Reading from the N-terminus, the 410-residue chain is Phospho-N-acetylmuramoyl-pentapeptide-transferase (410 aa).

Helical transmembrane passes span Arg-27–Ile-47, Thr-77–Met-97, Leu-99–Gly-119, Leu-140–Asn-160, Pro-213–Ile-233, Gly-248–Ser-268, Ile-288–Tyr-308, Val-312–Leu-332, Phe-337–Val-357, and Val-389–Phe-409.

This sequence belongs to the glycosyltransferase 4 family. MraY subfamily. The cofactor is Mg(2+).

It localises to the cell inner membrane. It carries out the reaction UDP-N-acetyl-alpha-D-muramoyl-L-alanyl-gamma-D-glutamyl-meso-2,6-diaminopimeloyl-D-alanyl-D-alanine + di-trans,octa-cis-undecaprenyl phosphate = di-trans,octa-cis-undecaprenyl diphospho-N-acetyl-alpha-D-muramoyl-L-alanyl-D-glutamyl-meso-2,6-diaminopimeloyl-D-alanyl-D-alanine + UMP. It participates in cell wall biogenesis; peptidoglycan biosynthesis. In terms of biological role, catalyzes the initial step of the lipid cycle reactions in the biosynthesis of the cell wall peptidoglycan: transfers peptidoglycan precursor phospho-MurNAc-pentapeptide from UDP-MurNAc-pentapeptide onto the lipid carrier undecaprenyl phosphate, yielding undecaprenyl-pyrophosphoryl-MurNAc-pentapeptide, known as lipid I. The polypeptide is Phospho-N-acetylmuramoyl-pentapeptide-transferase (Protochlamydia amoebophila (strain UWE25)).